The primary structure comprises 186 residues: CASP-like protein 4C2 (186 aa).

The Cytoplasmic segment spans residues methionine 1 to serine 31. Residues leucine 32–leucine 52 traverse the membrane as a helical segment. The Extracellular portion of the chain corresponds to threonine 53 to tyrosine 71. The chain crosses the membrane as a helical span at residues valine 72–tryptophan 92. Topologically, residues glutamate 93–glutamate 103 are cytoplasmic. The chain crosses the membrane as a helical span at residues isoleucine 104 to alanine 124. Topologically, residues asparagine 125–aspartate 150 are extracellular. The chain crosses the membrane as a helical span at residues isoleucine 151–glycine 171. Over phenylalanine 172 to valine 186 the chain is Cytoplasmic.

This sequence belongs to the Casparian strip membrane proteins (CASP) family. In terms of assembly, homodimer and heterodimers.

The protein localises to the cell membrane. This is CASP-like protein 4C2 from Populus trichocarpa (Western balsam poplar).